We begin with the raw amino-acid sequence, 448 residues long: UDP-N-acetylmuramoyl-L-alanine--L-glutamate ligase (448 aa).

G118–T124 serves as a coordination point for ATP.

This sequence belongs to the MurCDEF family. MurD2 subfamily.

It is found in the cytoplasm. It catalyses the reaction UDP-N-acetyl-alpha-D-muramoyl-L-alanine + L-glutamate + ATP = UDP-N-acetyl-alpha-D-muramoyl-L-alanyl-L-glutamate + ADP + phosphate + H(+). It functions in the pathway cell wall biogenesis; peptidoglycan biosynthesis. Functionally, cell wall formation. Catalyzes the addition of L-glutamate to the nucleotide precursor UDP-N-acetylmuramoyl-L-alanine. This chain is UDP-N-acetylmuramoyl-L-alanine--L-glutamate ligase, found in Salinispora tropica (strain ATCC BAA-916 / DSM 44818 / JCM 13857 / NBRC 105044 / CNB-440).